A 262-amino-acid polypeptide reads, in one-letter code: MLYSSNAILLTVICYELPLSERIRMLLRLEDLFDKIDFFSARDTSFEHHAVLVALFEILDVTSRSDLKSDLLQELDKQRTMLEGLRSNPEVSEKALDHILQDIRAAFRGLLDIPGRIGGHLRDDEWLMSVKQRMSIPGAACEFDLPAYHYWLNLAPEIRREDLKDWITPFTPIRSGINIVLNMLRNSGKNCCYTAVQGLFQQAGSEHQAHLLRLHISSEFPCVPEISANKYALNIRFVPWRSDHKTEVYEEDIPFELTFCSL.

It belongs to the ZapD family. In terms of assembly, interacts with FtsZ.

It localises to the cytoplasm. In terms of biological role, cell division factor that enhances FtsZ-ring assembly. Directly interacts with FtsZ and promotes bundling of FtsZ protofilaments, with a reduction in FtsZ GTPase activity. This chain is Cell division protein ZapD, found in Nitrosomonas europaea (strain ATCC 19718 / CIP 103999 / KCTC 2705 / NBRC 14298).